Here is a 114-residue protein sequence, read N- to C-terminus: uncharacterized protein (114 aa).

A helical membrane pass occupies residues 7 to 27 (YIFSFWFFFLVEYVVTFRLFL). Residues 90–114 (KNSPEKKKFKRGLPISSKYTDGKKR) are disordered.

It is found in the membrane. This is an uncharacterized protein from Saccharomyces cerevisiae (strain ATCC 204508 / S288c) (Baker's yeast).